We begin with the raw amino-acid sequence, 430 residues long: Dihydroorotase (430 aa).

Positions 57 and 59 each coordinate Zn(2+). Substrate is bound by residues 59-61 and Asn-91; that span reads HLR. The Zn(2+) site is built by Asp-151, His-178, and His-231. Asn-277 lines the substrate pocket. Asp-304 is a binding site for Zn(2+). Residue Asp-304 is part of the active site. Residues His-308 and 322 to 323 each bind substrate; that span reads PG.

This sequence belongs to the metallo-dependent hydrolases superfamily. DHOase family. Class I DHOase subfamily. Zn(2+) serves as cofactor.

The enzyme catalyses (S)-dihydroorotate + H2O = N-carbamoyl-L-aspartate + H(+). It participates in pyrimidine metabolism; UMP biosynthesis via de novo pathway; (S)-dihydroorotate from bicarbonate: step 3/3. In terms of biological role, catalyzes the reversible cyclization of carbamoyl aspartate to dihydroorotate. The chain is Dihydroorotase from Mycobacterium bovis (strain ATCC BAA-935 / AF2122/97).